The primary structure comprises 318 residues: MTPLKVVFAGTPEFARAALEAIAAAGHEIALVLSQPDRPAGRGMKLQASPVKQCAVAHGWPVAQPRSLRLDGKYPQDAAAAREALLAARPDVMVVAAYGLILPQWVLDLPVHGCLNIHASLLPRWRGAAPIHRAIEAGDAQTGITIMQMDAGLDTGDMLLREAVDIGSDTTARLHDRLAELGGRLIVQALADIGRLARTPQPAEGVTYASKVEKHEAQIDWNQPADAIVRRIRAFDPFPGANSLLDGETIKLWAAHAAPPAEVSAAPGTLLAVSDAGVAVAAAGSVVMATELQRPGGKRLAVADFLRGFDLKPGQRFG.

Residue 120 to 123 (SLLP) coordinates (6S)-5,6,7,8-tetrahydrofolate.

Belongs to the Fmt family.

The enzyme catalyses L-methionyl-tRNA(fMet) + (6R)-10-formyltetrahydrofolate = N-formyl-L-methionyl-tRNA(fMet) + (6S)-5,6,7,8-tetrahydrofolate + H(+). In terms of biological role, attaches a formyl group to the free amino group of methionyl-tRNA(fMet). The formyl group appears to play a dual role in the initiator identity of N-formylmethionyl-tRNA by promoting its recognition by IF2 and preventing the misappropriation of this tRNA by the elongation apparatus. This Variovorax paradoxus (strain S110) protein is Methionyl-tRNA formyltransferase.